A 93-amino-acid chain; its full sequence is Small ribosomal subunit protein uS19 (93 aa).

It belongs to the universal ribosomal protein uS19 family.

Its function is as follows. Protein S19 forms a complex with S13 that binds strongly to the 16S ribosomal RNA. This chain is Small ribosomal subunit protein uS19, found in Brevibacillus brevis (strain 47 / JCM 6285 / NBRC 100599).